The following is a 361-amino-acid chain: Heme A synthase (361 aa).

The next 8 helical transmembrane spans lie at 22–42 (LWVR…VLVG), 109–129 (LLAR…WVTG), 139–159 (LLGI…MVAS), 175–195 (HLTI…GLAP), 208–228 (FAFW…LVAG), 269–289 (FVHR…AIAT), 303–323 (VLLF…LLMV), and 324–344 (VPMD…GFAT). Histidine 271 is a heme binding site. A heme-binding site is contributed by histidine 332.

Belongs to the COX15/CtaA family. Type 2 subfamily. Interacts with CtaB. Heme b is required as a cofactor.

The protein resides in the cell membrane. It carries out the reaction Fe(II)-heme o + 2 A + H2O = Fe(II)-heme a + 2 AH2. It participates in porphyrin-containing compound metabolism; heme A biosynthesis; heme A from heme O: step 1/1. Its function is as follows. Catalyzes the conversion of heme O to heme A by two successive hydroxylations of the methyl group at C8. The first hydroxylation forms heme I, the second hydroxylation results in an unstable dihydroxymethyl group, which spontaneously dehydrates, resulting in the formyl group of heme A. This chain is Heme A synthase, found in Chelativorans sp. (strain BNC1).